The following is a 326-amino-acid chain: G-protein coupled receptor 1 (326 aa).

Ser-2 is modified (N-acetylserine). Residues 2 to 23 lie on the Extracellular side of the membrane; that stretch reads SAVLTAGGGLTAGDRSIITAIN. Residues 24-44 form a helical membrane-spanning segment; that stretch reads TGASSLSFVGSAFIVLCYCLF. Over 45 to 51 the chain is Cytoplasmic; it reads KELRKFS. The chain crosses the membrane as a helical span at residues 52–72; the sequence is FKLVFYLALSDMLCSFFLIVG. Residues 73–84 lie on the Extracellular side of the membrane; it reads DPSKGFICYAQG. A disulfide bridge links Cys-80 with Cys-151. A helical transmembrane segment spans residues 85-105; sequence YTTHFFCVASFLWTTTIAFTL. The Cytoplasmic segment spans residues 106–120; sequence HRTVVKHKTDVEDLE. Residues 121-141 traverse the membrane as a helical segment; it reads AMFHLYVWGTSLVVTVIRSFG. The Extracellular portion of the chain corresponds to 142–160; the sequence is NNHSHLGPWCWTQTGLKGK. The N-linked (GlcNAc...) asparagine glycan is linked to Asn-143. Residues 161-181 traverse the membrane as a helical segment; the sequence is AVHFLTFYAPLWGAILYNGFT. The Cytoplasmic segment spans residues 182–213; sequence YFQVIRMLRNARRMAVGMSDRVDQFDNRAELK. The helical transmembrane segment at 214 to 234 threads the bilayer; that stretch reads VLNRWGYYPLILIGSWAFGTI. The Extracellular segment spans residues 235–246; the sequence is NRIHDFIEPGHK. Residues 247-267 form a helical membrane-spanning segment; the sequence is IFWLSVLDVGTAALMGLFNSI. At 268–326 the chain is on the cytoplasmic side; the sequence is AYGFNSSVRRAIHERLELFLPERLYRWLPSNFRPKNHLILHQQQQQRSEMVSLKTEDQQ.

The protein belongs to the G-protein coupled receptor 2 family. As to quaternary structure, interacts with GPA1. In terms of tissue distribution, mostly present in the meristematic regions. Expressed at low levels in seedlings, vascular tissues of cotyledons, hypocotyl, and roots, stems, leaves, flowering buds and siliques. In dark-grown seedlings, localized in the cotyledons and the hook.

It localises to the cell membrane. In terms of biological role, together with GPA1, may regulate the cell cycle via a signaling cascade that uses phosphatidylinositol-specific phospholipase C (PI-PLC) as an effector and inositol 1,4,5-trisphosphate(IP(3)) as a second messenger. Promotes PI-PLC activity and IP(3) accumulation. Involved in the blue light (BL) signaling. Together with GPA1 and ADT3, required for BL-mediated synthesis of phenylpyruvate and subsequently of phenylalanine (Phe), in etiolated seedlings. Probably involved in cytokinin signal transduction. Plays a positive role in gibberellin- (GA) and brassinosteroid- (BR) regulated seed germination, probably independently of a heterotrimeric G-protein. Mediates seed dormancy abolition, and promotes seed germination and flowering. This Arabidopsis thaliana (Mouse-ear cress) protein is G-protein coupled receptor 1 (GCR1).